The primary structure comprises 221 residues: Serine/arginine-rich splicing factor 9 (221 aa).

RRM domains follow at residues 14 to 89 and 111 to 187; these read GRIY…FPRA and FRVL…PERG. Lys36 is covalently cross-linked (Glycyl lysine isopeptide (Lys-Gly) (interchain with G-Cter in SUMO2)). The segment covering 187–198 has biased composition (low complexity); sequence GTSYGCSRSRSG. The segment at 187–221 is disordered; it reads GTSYGCSRSRSGSRGRDSPYQSRGSPHYFSPFRPY. Positions 188–200 are interaction with SAFB1; the sequence is TSYGCSRSRSGSR. Phosphoserine is present on residues Ser189, Ser193, Ser195, Ser204, Ser208, and Ser211. Residue Tyr214 is modified to Phosphotyrosine. Ser216 bears the Phosphoserine mark.

Belongs to the splicing factor SR family. In terms of assembly, interacts with KHDRBS3. Interacts with HABP4. Interacts with NOL3/ARC/NOP30. Interacts with NSEP1/YB-1/YB1. Interacts with SAFB/SAFB1. Interacts with SRSF6/SFRS6. Interacts with TRA2B/SFRS10. Interacts with C1QBP. May also interact with DUSP11/PIR1. Post-translationally, extensively phosphorylated on serine residues in the RS domain.

Its subcellular location is the nucleus. In terms of biological role, plays a role in constitutive splicing and can modulate the selection of alternative splice sites. Represses the splicing of MAPT/Tau exon 10. The chain is Serine/arginine-rich splicing factor 9 (Srsf9) from Rattus norvegicus (Rat).